A 276-amino-acid chain; its full sequence is Expansin-A25 (276 aa).

The signal sequence occupies residues 1–27; the sequence is MKLLEQMVYVECFMIIMATLLVSMSYG. An Expansin-like EG45 domain is found at 73 to 183; the sequence is QGACGYGDLF…RRISCARTGG (111 aa). In terms of domain architecture, Expansin-like CBD spans 193–272; it reads YFLMILPYNV…NWGFGQTFDG (80 aa).

The protein belongs to the expansin family. Expansin A subfamily.

The protein localises to the secreted. The protein resides in the cell wall. It is found in the membrane. Functionally, causes loosening and extension of plant cell walls by disrupting non-covalent bonding between cellulose microfibrils and matrix glucans. No enzymatic activity has been found. The sequence is that of Expansin-A25 (EXPA25) from Arabidopsis thaliana (Mouse-ear cress).